Reading from the N-terminus, the 265-residue chain is Tryptophan synthase alpha chain (265 aa).

Active-site proton acceptor residues include glutamate 48 and aspartate 59.

It belongs to the TrpA family. In terms of assembly, tetramer of two alpha and two beta chains.

It catalyses the reaction (1S,2R)-1-C-(indol-3-yl)glycerol 3-phosphate + L-serine = D-glyceraldehyde 3-phosphate + L-tryptophan + H2O. Its pathway is amino-acid biosynthesis; L-tryptophan biosynthesis; L-tryptophan from chorismate: step 5/5. Functionally, the alpha subunit is responsible for the aldol cleavage of indoleglycerol phosphate to indole and glyceraldehyde 3-phosphate. The chain is Tryptophan synthase alpha chain from Pelagibacter ubique (strain HTCC1062).